The primary structure comprises 339 residues: 3-isopropylmalate dehydrogenase (339 aa).

Positions 88, 98, 122, and 212 each coordinate substrate. Mg(2+) contacts are provided by D212, D236, and D240. Position 272–284 (272–284 (GSAPDIAGQGIAD)) interacts with NAD(+).

It belongs to the isocitrate and isopropylmalate dehydrogenases family. LeuB type 2 subfamily. In terms of assembly, homodimer. Mg(2+) serves as cofactor. Mn(2+) is required as a cofactor.

It is found in the cytoplasm. It carries out the reaction (2R,3S)-3-isopropylmalate + NAD(+) = 4-methyl-2-oxopentanoate + CO2 + NADH. It functions in the pathway amino-acid biosynthesis; L-leucine biosynthesis; L-leucine from 3-methyl-2-oxobutanoate: step 3/4. Functionally, catalyzes the oxidation of 3-carboxy-2-hydroxy-4-methylpentanoate (3-isopropylmalate) to 3-carboxy-4-methyl-2-oxopentanoate. The product decarboxylates to 4-methyl-2 oxopentanoate. The chain is 3-isopropylmalate dehydrogenase from Corynebacterium diphtheriae (strain ATCC 700971 / NCTC 13129 / Biotype gravis).